The following is a 499-amino-acid chain: Thioredoxin reductase 1, cytoplasmic (499 aa).

FAD contacts are provided by residues 18–23 (IGGGSG), 42–43 (DF), 58–59 (TC), and 63–67 (GCIPK). Cys59 and Cys64 are oxidised to a cystine. Lys68 bears the N6-succinyllysine mark. Tyr131 carries the phosphotyrosine modification. FAD-binding positions include 131–132 (YG) and Thr161. NADP(+) contacts are provided by residues Arg166, 198 to 204 (ASYVALE), 221 to 222 (RS), Arg226, 226 to 228 (RGF), 291 to 293 (VGR), and Lys315. Residue Tyr200 participates in FAD binding. Residues Asp334, 341–343 (ELT), and His472 each bind FAD. Residue Glu341 coordinates NADP(+). His472 functions as the Proton acceptor in the catalytic mechanism. Positions 497 to 498 (CU) form a cross-link, cysteinyl-selenocysteine (Cys-Sec). Position 498 (Sec498) is a non-standard amino acid, selenocysteine.

It belongs to the class-I pyridine nucleotide-disulfide oxidoreductase family. In terms of assembly, homodimer. The cofactor is FAD. Post-translationally, ISGylated.

The protein resides in the cytoplasm. The enzyme catalyses [thioredoxin]-dithiol + NADP(+) = [thioredoxin]-disulfide + NADPH + H(+). The catalysed reaction is H2O2 + NADPH + H(+) = NADP(+) + 2 H2O. Its function is as follows. Reduces disulfideprotein thioredoxin (Trx) to its dithiol-containing form. Homodimeric flavoprotein involved in the regulation of cellular redox reactions, growth and differentiation. Contains a selenocysteine residue at the C-terminal active site that is essential for catalysis. Also has reductase activity on hydrogen peroxide (H2O2). This is Thioredoxin reductase 1, cytoplasmic from Rattus norvegicus (Rat).